The primary structure comprises 170 residues: Cytidine diphosphoramidate kinase (170 aa).

This sequence belongs to the APS kinase family.

The enzyme catalyses cytidine 5'-diphosphoramidate + ATP = cytidine 3'-phospho-5'-diphosphoramidate + ADP + H(+). It functions in the pathway capsule biogenesis; capsule polysaccharide biosynthesis. Functionally, involved in the biosynthesis of the O-methyl phosphoramidate (MeOPN) group found on the capsular polysaccharide (CPS) of C.jejuni. Catalyzes the ATP-dependent phosphorylation of cytidine diphosphoramidate (CDP-NH(2)) to form cytidine 3'-phosphate 5'-diphosphoramidate. Can also use other substrates such as the corresponding adenine and uridine diphosphoramidate derivatives or cytidine diphosphoramidate analogs, with lower efficiency. This chain is Cytidine diphosphoramidate kinase, found in Campylobacter jejuni subsp. jejuni serotype O:2 (strain ATCC 700819 / NCTC 11168).